A 120-amino-acid polypeptide reads, in one-letter code: Small ribosomal subunit protein uS19 (120 aa).

Belongs to the universal ribosomal protein uS19 family.

The protein is Small ribosomal subunit protein uS19 (RPS15) of Naegleria gruberi (Amoeba).